The sequence spans 529 residues: Membrane-bound lytic murein transglycosylase F (529 aa).

The N-terminal stretch at 1–27 is a signal peptide; sequence MPIFNLHQLRNFLFIIATTLFLSACQI. The segment at 28–287 is non-LT domain; that stretch reads ESKPTSELDQ…RLEEKYIGHI (260 aa). The segment at 288 to 529 is LT domain; the sequence is GSFDYVDTRA…QATLTTEVQP (242 aa). E332 is an active-site residue. The disordered stretch occupies residues 510 to 529; the sequence is EALSPDVGVSQATLTTEVQP. A compositionally biased stretch (polar residues) spans 519–529; that stretch reads SQATLTTEVQP.

It in the N-terminal section; belongs to the bacterial solute-binding protein 3 family. The protein in the C-terminal section; belongs to the transglycosylase Slt family.

Its subcellular location is the cell outer membrane. It carries out the reaction Exolytic cleavage of the (1-&gt;4)-beta-glycosidic linkage between N-acetylmuramic acid (MurNAc) and N-acetylglucosamine (GlcNAc) residues in peptidoglycan, from either the reducing or the non-reducing ends of the peptidoglycan chains, with concomitant formation of a 1,6-anhydrobond in the MurNAc residue.. In terms of biological role, murein-degrading enzyme that degrades murein glycan strands and insoluble, high-molecular weight murein sacculi, with the concomitant formation of a 1,6-anhydromuramoyl product. Lytic transglycosylases (LTs) play an integral role in the metabolism of the peptidoglycan (PG) sacculus. Their lytic action creates space within the PG sacculus to allow for its expansion as well as for the insertion of various structures such as secretion systems and flagella. The protein is Membrane-bound lytic murein transglycosylase F of Vibrio vulnificus (strain CMCP6).